Reading from the N-terminus, the 89-residue chain is Defensin-like protein 250 (89 aa).

An N-terminal signal peptide occupies residues 1-23; it reads MKLAAIFLVSCVLLSLLPSLTIA. 4 cysteine pairs are disulfide-bonded: Cys29–Cys86, Cys40–Cys69, Cys48–Cys79, and Cys67–Cys81.

Belongs to the DEFL family.

The protein localises to the secreted. The sequence is that of Defensin-like protein 250 (SCRL8) from Arabidopsis thaliana (Mouse-ear cress).